The primary structure comprises 583 residues: Aspartate--tRNA ligase (583 aa).

Glu-174 lines the L-aspartate pocket. An aspartate region spans residues 198–201 (QITK). An L-aspartate-binding site is contributed by Arg-220. ATP-binding positions include 220-222 (RDE) and Gln-229. An L-aspartate-binding site is contributed by His-443. Glu-477 is a binding site for ATP. Arg-484 contributes to the L-aspartate binding site. Residue 529–532 (GLDR) participates in ATP binding.

Belongs to the class-II aminoacyl-tRNA synthetase family. Type 1 subfamily. As to quaternary structure, homodimer.

The protein resides in the cytoplasm. The enzyme catalyses tRNA(Asp) + L-aspartate + ATP = L-aspartyl-tRNA(Asp) + AMP + diphosphate. Catalyzes the attachment of L-aspartate to tRNA(Asp) in a two-step reaction: L-aspartate is first activated by ATP to form Asp-AMP and then transferred to the acceptor end of tRNA(Asp). This Streptococcus thermophilus (strain ATCC BAA-491 / LMD-9) protein is Aspartate--tRNA ligase.